Consider the following 346-residue polypeptide: Cyclin-dependent kinase 20 (346 aa).

Positions 4–288 (YCILGRIGEG…ASKALLHQYF (285 aa)) constitute a Protein kinase domain. ATP contacts are provided by residues 10–18 (IGEGAHGIV) and Lys33. Asp127 serves as the catalytic Proton acceptor.

It belongs to the protein kinase superfamily. CMGC Ser/Thr protein kinase family. CDC2/CDKX subfamily. In terms of assembly, monomer. Interacts with TBC1D32 and MAK.

The protein resides in the nucleus. It localises to the cytoplasm. It is found in the cell projection. Its subcellular location is the cilium. It catalyses the reaction L-seryl-[protein] + ATP = O-phospho-L-seryl-[protein] + ADP + H(+). The enzyme catalyses L-threonyl-[protein] + ATP = O-phospho-L-threonyl-[protein] + ADP + H(+). Functionally, required for high-level Shh responses in the developing neural tube. Together with TBC1D32, controls the structure of the primary cilium by coordinating assembly of the ciliary membrane and axoneme, allowing GLI2 to be properly activated in response to SHH signaling. Involved in cell growth. Activates CDK2, a kinase involved in the control of the cell cycle, by phosphorylating residue 'Thr-160'. The sequence is that of Cyclin-dependent kinase 20 (CDK20) from Pongo abelii (Sumatran orangutan).